Consider the following 685-residue polypeptide: DNA ligase (685 aa).

Residues 48–52 (DAEYD), 97–98 (SL), and Glu131 contribute to the NAD(+) site. The N6-AMP-lysine intermediate role is filled by Lys133. 4 residues coordinate NAD(+): Arg154, Glu190, Lys304, and Lys328. Residues Cys422, Cys425, Cys440, and Cys445 each coordinate Zn(2+). The region spanning 603–685 (PEEGPLSGRR…RLLSGEERPG (83 aa)) is the BRCT domain.

The protein belongs to the NAD-dependent DNA ligase family. LigA subfamily. Requires Mg(2+) as cofactor. It depends on Mn(2+) as a cofactor.

It catalyses the reaction NAD(+) + (deoxyribonucleotide)n-3'-hydroxyl + 5'-phospho-(deoxyribonucleotide)m = (deoxyribonucleotide)n+m + AMP + beta-nicotinamide D-nucleotide.. In terms of biological role, DNA ligase that catalyzes the formation of phosphodiester linkages between 5'-phosphoryl and 3'-hydroxyl groups in double-stranded DNA using NAD as a coenzyme and as the energy source for the reaction. It is essential for DNA replication and repair of damaged DNA. This is DNA ligase from Rubrobacter xylanophilus (strain DSM 9941 / JCM 11954 / NBRC 16129 / PRD-1).